Here is a 1445-residue protein sequence, read N- to C-terminus: Spermatogenesis-associated protein 31E1 (1445 aa).

The helical transmembrane segment at 64–84 (WMMDFILTSVCGLVLLFLLLL) threads the bilayer. Disordered regions lie at residues 90–115 (PPSP…SRSR) and 169–262 (VPAK…PDSS). The span at 101 to 110 (SREPQRERSG) shows a compositional bias: basic and acidic residues. Residues 241-260 (VFPPSPQPHGPLASSPPPPD) are compositionally biased toward pro residues. A glycan (N-linked (GlcNAc...) asparagine) is linked at N408. Disordered stretches follow at residues 411–430 (TQPQ…TVGN), 460–557 (NPSS…ERTQ), 592–619 (LSQP…PGVV), and 637–761 (QEQS…KEHL). The span at 664–681 (PQSQAEDTQQALLPSQPS) shows a compositional bias: polar residues. N-linked (GlcNAc...) asparagine glycosylation is found at N819, N906, and N1160. Disordered regions lie at residues 894-966 (FLGK…TCSL), 1143-1242 (RLPT…IGDK), 1254-1280 (KGQT…RKGG), and 1378-1445 (SPKA…CLAS). Polar residues-rich tracts occupy residues 906–915 (NRTTSKSVPT) and 1148–1165 (APLS…TASQ). A compositionally biased stretch (basic and acidic residues) spans 1202 to 1217 (DKGEAHRRPRTGEQGH).

The protein belongs to the SPATA31 family.

It is found in the membrane. Its function is as follows. May play a role in spermatogenesis. The protein is Spermatogenesis-associated protein 31E1 (SPATA31E1) of Homo sapiens (Human).